The primary structure comprises 206 residues: Inner membrane protein YnjF (206 aa).

Over 1-37 (MLDRHLHPRIKPLLHQCVRVLDKPGITPDGLTLVGFA) the chain is Periplasmic. Residues 38 to 60 (IGVLALPFLALGWYLAALVVILL) form a helical membrane-spanning segment. Residues 61 to 79 (NRLLDGLDGALARRRELTD) lie on the Cytoplasmic side of the membrane. Residues 80–102 (AGGFLDISLDFLFYALVPFGFIL) form a helical membrane-spanning segment. Topologically, residues 103–111 (AAPEQNALA) are periplasmic. Residues 112-134 (GGWLLFAFIGTGSSFLAFAALAA) traverse the membrane as a helical segment. The Cytoplasmic segment spans residues 135 to 146 (KHQIDNPGYAHK). The helical transmembrane segment at 147-169 (SFYYLGGLTEGTETILLFVLGCL) threads the bilayer. Residues 170–173 (FPAW) lie on the Periplasmic side of the membrane. Residues 174–196 (FAWFAWIFGALCWMTTFTRVWSG) traverse the membrane as a helical segment. At 197-206 (YLTLKSLQRQ) the chain is on the cytoplasmic side.

It belongs to the CDP-alcohol phosphatidyltransferase class-I family.

Its subcellular location is the cell inner membrane. The sequence is that of Inner membrane protein YnjF (ynjF) from Escherichia coli (strain K12).